The following is a 161-amino-acid chain: Cytochrome c-type biogenesis protein CcmE (161 aa).

Residues 1–8 are Cytoplasmic-facing; that stretch reads MNARRKKR. Residues 9-29 traverse the membrane as a helical; Signal-anchor for type II membrane protein segment; that stretch reads LALATALIGGVAAIASLLLYA. The Periplasmic segment spans residues 30–161; the sequence is LNSNLNLFYT…DYNAEQKSGY (132 aa). Residues H131 and Y135 each coordinate heme.

Belongs to the CcmE/CycJ family.

It is found in the cell inner membrane. Functionally, heme chaperone required for the biogenesis of c-type cytochromes. Transiently binds heme delivered by CcmC and transfers the heme to apo-cytochromes in a process facilitated by CcmF and CcmH. This chain is Cytochrome c-type biogenesis protein CcmE, found in Shewanella woodyi (strain ATCC 51908 / MS32).